A 66-amino-acid polypeptide reads, in one-letter code: Beta-toxin Cbo4 (66 aa).

Residues 1–66 (KEGYIVDYHT…VWPLPNKRCK (66 aa)) form the LCN-type CS-alpha/beta domain. Intrachain disulfides connect cysteine 12-cysteine 65, cysteine 16-cysteine 41, cysteine 25-cysteine 46, and cysteine 29-cysteine 48. Position 66 is a lysine amide (lysine 66).

Belongs to the long (4 C-C) scorpion toxin superfamily. Sodium channel inhibitor family. Beta subfamily. In terms of tissue distribution, expressed by the venom gland.

It localises to the secreted. Functionally, beta toxins bind voltage-independently at site-4 of sodium channels and shift the voltage of activation toward more negative potentials thereby affecting sodium channel activation and promoting spontaneous and repetitive firing. Is active on the human voltage-gated sodium channels Nav1.4/SCN4A, Nav1.5/SCN5A and Nav1.6/SCN8A when tested at 200 nM. In vivo, is toxic to mice when intraperitoneally injected. This chain is Beta-toxin Cbo4, found in Centruroides bonito (Scorpion).